A 503-amino-acid polypeptide reads, in one-letter code: MEAAVAAPRPRLLLLVLAAAAAAAAALLPGATALQCFCHLCTKDNFTCVTDGLCFVSVTETTDKVIHNSMCIAEIDLIPRDRPFVCAPSSKTGSVTTTYCCNQDHCNKIELPTTVKSSPGLGPVELAAVIAGPVCFVCISLMLMVYICHNRTVIHHRVPNEEDPSLDRPFISEGTTLKDLIYDMTTSGSGSGLPLLVQRTIARTIVLQESIGKGRFGEVWRGKWRGEEVAVKIFSSREERSWFREAEIYQTVMLRHENILGFIAADNKDNGTWTQLWLVSDYHEHGSLFDYLNRYTVTVEGMIKLALSTASGLAHLHMEIVGTQGKPAIAHRDLKSKNILVKKNGTCCIADLGLAVRHDSATDTIDIAPNHRVGTKRYMAPEVLDDSINMKHFESFKRADIYAMGLVFWEIARRCSIGGIHEDYQLPYYDLVPSDPSVEEMRKVVCEQKLRPNIPNRWQSCEALRVMAKIMRECWYANGAARLTALRIKKTLSQLSQQEGIKM.

Residues 1-33 form the signal peptide; the sequence is MEAAVAAPRPRLLLLVLAAAAAAAAALLPGATA. Over 34–126 the chain is Extracellular; it reads LQCFCHLCTK…SSPGLGPVEL (93 aa). Intrachain disulfides connect Cys-36–Cys-54, Cys-38–Cys-41, Cys-48–Cys-71, Cys-86–Cys-100, and Cys-101–Cys-106. Asn-45 carries N-linked (GlcNAc...) asparagine glycosylation. The chain crosses the membrane as a helical span at residues 127 to 147; the sequence is AAVIAGPVCFVCISLMLMVYI. Residues 148–503 are Cytoplasmic-facing; sequence CHNRTVIHHR…QLSQQEGIKM (356 aa). Ser-165 carries the phosphoserine modification. In terms of domain architecture, GS spans 175 to 204; that stretch reads TTLKDLIYDMTTSGSGSGLPLLVQRTIART. Phosphothreonine; by TGFBR2 is present on residues Thr-185 and Thr-186. Phosphoserine; by TGFBR2 is present on residues Ser-187, Ser-189, and Ser-191. Residues 193 to 194 carry the FKBP1A-binding motif; it reads LP. One can recognise a Protein kinase domain in the interval 205–495; it reads IVLQESIGKG…LRIKKTLSQL (291 aa). ATP is bound by residues 211–219 and Lys-232; that span reads IGKGRFGEV. Lys-268 participates in a covalent cross-link: Glycyl lysine isopeptide (Lys-Gly) (interchain with G-Cter in ubiquitin). The active-site Proton acceptor is Asp-333. Residue Lys-391 forms a Glycyl lysine isopeptide (Lys-Gly) (interchain with G-Cter in SUMO) linkage.

The protein belongs to the protein kinase superfamily. TKL Ser/Thr protein kinase family. TGFB receptor subfamily. Homodimer; in the endoplasmic reticulum but also at the cell membrane. Heterohexamer; TGFB1, TGFB2 and TGFB3 homodimeric ligands assemble a functional receptor composed of two TGFBR1 and TGFBR2 heterodimers to form a ligand-receptor heterohexamer. The respective affinity of TGBRB1 and TGFBR2 for the ligands may modulate the kinetics of assembly of the receptor and may explain the different biological activities of TGFB1, TGFB2 and TGFB3. Component of a complex composed of TSC22D1 (via N-terminus), TGFBR1 and TGFBR2; the interaction between TSC22D1 and TGFBR1 is inhibited by SMAD7 and promoted by TGFB1. Interacts with CD109; inhibits TGF-beta receptor activation in keratinocytes. Interacts with RBPMS. Interacts (unphosphorylated) with FKBP1A; prevents TGFBR1 phosphorylation by TGFBR2 and stabilizes it in the inactive conformation. Interacts with SMAD2, SMAD3 and ZFYVE9; ZFYVE9 recruits SMAD2 and SMAD3 to the TGF-beta receptor. Interacts with TRAF6 and MAP3K7; induces MAP3K7 activation by TRAF6. Interacts with PARD6A; involved in TGF-beta induced epithelial to mesenchymal transition. Interacts with NEDD4L. Interacts with SMAD7, SMURF1 and SMURF2; SMAD7 recruits NEDD4L, SMURF1 and SMURF2 to the TGF-beta receptor. Interacts with USP15 and VPS39. Interacts with SDCBP (via C-terminus). Interacts with CAV1 and this interaction is impaired in the presence of SDCBP. Interacts with APPL1; interaction is TGF beta dependent; mediates trafficking of the TGFBR1 from the endosomes to the nucleus via microtubules in a TRAF6-dependent manner. Interacts with GPR50; this interaction promotes the constitutive activation of SMAD signaling pathway. The cofactor is Mg(2+). It depends on Mn(2+) as a cofactor. In terms of processing, phosphorylated at basal levels in the absence of ligand. Activated upon phosphorylation by TGFBR2, mainly in the GS domain. Phosphorylation in the GS domain abrogates FKBP1A-binding. N-Glycosylated. Post-translationally, ubiquitinated; undergoes ubiquitination catalyzed by several E3 ubiquitin ligases including SMURF1, SMURF2 and NEDD4L2. Results in the proteasomal and/or lysosomal degradation of the receptor thereby negatively regulating its activity. Deubiquitinated by USP15, leading to stabilization of the protein and enhanced TGF-beta signal. Its ubiquitination and proteasome-mediated degradation is negatively regulated by SDCBP. Ubiquitinated by BFAR via'Lys-63'-linked ubiquitination at Lys-268, leading to TGF-beta signaling activation. As to expression, found in all tissues examined, most abundant in placenta and least abundant in brain and heart. Expressed in a variety of cancer cell lines.

It localises to the cell membrane. It is found in the cell junction. The protein resides in the tight junction. Its subcellular location is the cell surface. The protein localises to the membrane raft. The catalysed reaction is L-threonyl-[receptor-protein] + ATP = O-phospho-L-threonyl-[receptor-protein] + ADP + H(+). The enzyme catalyses L-seryl-[receptor-protein] + ATP = O-phospho-L-seryl-[receptor-protein] + ADP + H(+). Its activity is regulated as follows. Kept in an inactive conformation by FKBP1A preventing receptor activation in absence of ligand. CD109 is another inhibitor of the receptor. Transmembrane serine/threonine kinase forming with the TGF-beta type II serine/threonine kinase receptor, TGFBR2, the non-promiscuous receptor for the TGF-beta cytokines TGFB1, TGFB2 and TGFB3. Transduces the TGFB1, TGFB2 and TGFB3 signal from the cell surface to the cytoplasm and is thus regulating a plethora of physiological and pathological processes including cell cycle arrest in epithelial and hematopoietic cells, control of mesenchymal cell proliferation and differentiation, wound healing, extracellular matrix production, immunosuppression and carcinogenesis. The formation of the receptor complex composed of 2 TGFBR1 and 2 TGFBR2 molecules symmetrically bound to the cytokine dimer results in the phosphorylation and the activation of TGFBR1 by the constitutively active TGFBR2. Activated TGFBR1 phosphorylates SMAD2 which dissociates from the receptor and interacts with SMAD4. The SMAD2-SMAD4 complex is subsequently translocated to the nucleus where it modulates the transcription of the TGF-beta-regulated genes. This constitutes the canonical SMAD-dependent TGF-beta signaling cascade. Also involved in non-canonical, SMAD-independent TGF-beta signaling pathways. For instance, TGFBR1 induces TRAF6 autoubiquitination which in turn results in MAP3K7 ubiquitination and activation to trigger apoptosis. Also regulates epithelial to mesenchymal transition through a SMAD-independent signaling pathway through PARD6A phosphorylation and activation. The sequence is that of TGF-beta receptor type-1 (TGFBR1) from Homo sapiens (Human).